Here is a 175-residue protein sequence, read N- to C-terminus: RNA pyrophosphohydrolase (175 aa).

Residues 6 to 150 (GFRPNVGIVI…KREVYRRVMK (145 aa)) form the Nudix hydrolase domain. The short motif at 38–59 (GGVDDGETPEQAMYRELYEEIG) is the Nudix box element.

This sequence belongs to the Nudix hydrolase family. RppH subfamily. It depends on a divalent metal cation as a cofactor.

Functionally, accelerates the degradation of transcripts by removing pyrophosphate from the 5'-end of triphosphorylated RNA, leading to a more labile monophosphorylated state that can stimulate subsequent ribonuclease cleavage. The sequence is that of RNA pyrophosphohydrolase from Aeromonas hydrophila subsp. hydrophila (strain ATCC 7966 / DSM 30187 / BCRC 13018 / CCUG 14551 / JCM 1027 / KCTC 2358 / NCIMB 9240 / NCTC 8049).